The primary structure comprises 48 residues: Light-harvesting protein B-870 beta chain (48 aa).

The Cytoplasmic portion of the chain corresponds to 2-21 (AERKGSISGLTDDEAQEFHK). Positions 20 and 38 each coordinate a bacteriochlorophyll. A helical transmembrane segment spans residues 22–44 (FWVQGFVGFTAVAVVAHFLVWVW). Residues 45-48 (RPWL) lie on the Periplasmic side of the membrane.

An alpha/beta heterodimer. The core complex is formed by different alpha and beta chains, binding bacteriochlorophyll molecules, and arranged most probably in tetrameric structures disposed around the reaction center. The non-pigmented gamma chains may constitute additional components.

Its subcellular location is the cell inner membrane. In terms of biological role, antenna complexes are light-harvesting systems, which transfer the excitation energy to the reaction centers. In Rubrivivax gelatinosus (Rhodocyclus gelatinosus), this protein is Light-harvesting protein B-870 beta chain (pufB).